The chain runs to 219 residues: Elongation factor Ts (219 aa).

The segment at 82–85 (TDFV) is involved in Mg(2+) ion dislocation from EF-Tu.

Belongs to the EF-Ts family.

It localises to the cytoplasm. Its function is as follows. Associates with the EF-Tu.GDP complex and induces the exchange of GDP to GTP. It remains bound to the aminoacyl-tRNA.EF-Tu.GTP complex up to the GTP hydrolysis stage on the ribosome. The polypeptide is Elongation factor Ts (Anaeromyxobacter sp. (strain K)).